Consider the following 247-residue polypeptide: TLC domain-containing protein 1 (247 aa).

An N-terminal signal peptide occupies residues 1-27 (MPLLFHPAWPLLLGATLTFRALRRVLC). Residues 28 to 46 (RLPQPAHVQTDPLRTWRWH) are Extracellular-facing. Residues 40–234 (LRTWRWHNLL…LLRSDFCPER (195 aa)) form the TLC domain. A helical transmembrane segment spans residues 47–67 (NLLVSFTHSIVSGIWALLCLW). Residues 68–83 (QTPEMLVEIETAWSAS) are Cytoplasmic-facing. Residues 84–104 (GYLLVCFSAGYFIHDTVDIVV) traverse the membrane as a helical segment. Residues 105-123 (SKQTRASWEYLVHHVMAMG) are Extracellular-facing. Positions 124-144 (AFFSGIFWKRFVGGGVLTLLV) form an intramembrane region, helical. Residues 145 to 173 (EVSNIFLTLRMMMKINNAQDLLLYKVNKY) lie on the Extracellular side of the membrane. The chain crosses the membrane as a helical span at residues 174-194 (INLVMYFLFRLAPQAYLTKFF). Residues 195–201 (LQYAGQR) lie on the Cytoplasmic side of the membrane. Residues 202–222 (TLGTFLLAILLMLDLMIIIYF) form a helical membrane-spanning segment. The Extracellular segment spans residues 223-247 (SRLLRSDFCPERAPRRQQKDKFLTE).

The protein resides in the cell membrane. Its function is as follows. Regulates the composition and fluidity of the plasma membrane. Inhibits the incorporation of membrane-fluidizing phospholipids containing omega-3 long-chain polyunsaturated fatty acids (LCPUFA) and thereby promotes membrane rigidity. Does not appear to have any effect on LCPUFA synthesis. The chain is TLC domain-containing protein 1 (Tlcd1) from Mus musculus (Mouse).